A 361-amino-acid polypeptide reads, in one-letter code: Dual specificity mitogen-activated protein kinase kinase 6 (361 aa).

2 stretches are compositionally biased toward basic and acidic residues: residues 1 to 11 (MEGGSDKESKV) and 37 to 48 (PKELKLPKEVFE). Positions 1 to 61 (MEGGSDKESK…PAPTPPRDLD (61 aa)) are disordered. Residues 30–46 (VRGKKKLPKELKLPKEV) form a d domain region. Residues 80-341 (LEQIGELGRG…YTELMQHPFF (262 aa)) enclose the Protein kinase domain. ATP is bound by residues 86–94 (LGRGAYGVV) and K109. Catalysis depends on D206, which acts as the Proton acceptor. S234 is subject to Phosphoserine; by MAPK3. T238 carries the post-translational modification Phosphothreonine; by MAPK3. The DVD domain stretch occupies residues 338-361 (HPFFTLHDSKDTDVASFVKTILGD).

This sequence belongs to the protein kinase superfamily. STE Ser/Thr protein kinase family. MAP kinase kinase subfamily. Dimer. Interacts (via its D domain) with its MAP kinase substrates. Interacts (via its DVD domain) with MAP3Ks activators. Post-translationally, weakly autophosphorylated. Phosphorylated at Ser-234 and Thr-238 by the majority of M3Ks.

It localises to the nucleus. The protein localises to the cytoplasm. Its subcellular location is the cytoskeleton. The catalysed reaction is L-seryl-[protein] + ATP = O-phospho-L-seryl-[protein] + ADP + H(+). The enzyme catalyses L-threonyl-[protein] + ATP = O-phospho-L-threonyl-[protein] + ADP + H(+). It catalyses the reaction L-tyrosyl-[protein] + ATP = O-phospho-L-tyrosyl-[protein] + ADP + H(+). Its activity is regulated as follows. Activated by dual phosphorylation on Ser-234 and Thr-238 in response to a variety of cellular stresses, including UV radiation, osmotic shock, hypoxia, inflammatory cytokines, interferon gamma (IFNG), and less often by growth factors. MAP2K6/MKK6 is activated by the majority of M3Ks. Its function is as follows. Dual specificity protein kinase which acts as an essential component of the MAP kinase signal transduction pathway. Catalyzes the concomitant phosphorylation of a threonine and a tyrosine residue in the MAP kinases p38 and plays an important role in the regulation of cellular responses to cytokines and all kinds of stresses. The p38 MAP kinase signal transduction pathway leads to direct activation of transcription factors. Phosphorylation by MAP2K6 asymmetrically activates p38 on one side of the blastodisc, an event which is necessary for blastomere cleavage. This is Dual specificity mitogen-activated protein kinase kinase 6 from Danio rerio (Zebrafish).